Here is a 226-residue protein sequence, read N- to C-terminus: Endonuclease NucS (226 aa).

It belongs to the NucS endonuclease family.

Its subcellular location is the cytoplasm. In terms of biological role, cleaves both 3' and 5' ssDNA extremities of branched DNA structures. The polypeptide is Endonuclease NucS (Mycobacterium ulcerans (strain Agy99)).